We begin with the raw amino-acid sequence, 429 residues long: 3-phosphoshikimate 1-carboxyvinyltransferase (429 aa).

3-phosphoshikimate contacts are provided by Lys-22, Ser-23, and Arg-27. Residue Lys-22 coordinates phosphoenolpyruvate. Phosphoenolpyruvate is bound by residues Gly-94 and Arg-122. 3-phosphoshikimate is bound by residues Ser-167, Gln-169, Asp-315, and Lys-342. Phosphoenolpyruvate is bound at residue Gln-169. Catalysis depends on Asp-315, which acts as the Proton acceptor. Phosphoenolpyruvate-binding residues include Arg-346 and Arg-388.

Belongs to the EPSP synthase family. Monomer.

The protein resides in the cytoplasm. It catalyses the reaction 3-phosphoshikimate + phosphoenolpyruvate = 5-O-(1-carboxyvinyl)-3-phosphoshikimate + phosphate. Its pathway is metabolic intermediate biosynthesis; chorismate biosynthesis; chorismate from D-erythrose 4-phosphate and phosphoenolpyruvate: step 6/7. Catalyzes the transfer of the enolpyruvyl moiety of phosphoenolpyruvate (PEP) to the 5-hydroxyl of shikimate-3-phosphate (S3P) to produce enolpyruvyl shikimate-3-phosphate and inorganic phosphate. This is 3-phosphoshikimate 1-carboxyvinyltransferase from Geobacter sulfurreducens (strain ATCC 51573 / DSM 12127 / PCA).